A 99-amino-acid chain; its full sequence is Aspartyl/glutamyl-tRNA(Asn/Gln) amidotransferase subunit C (99 aa).

Belongs to the GatC family. As to quaternary structure, heterotrimer of A, B and C subunits.

The catalysed reaction is L-glutamyl-tRNA(Gln) + L-glutamine + ATP + H2O = L-glutaminyl-tRNA(Gln) + L-glutamate + ADP + phosphate + H(+). The enzyme catalyses L-aspartyl-tRNA(Asn) + L-glutamine + ATP + H2O = L-asparaginyl-tRNA(Asn) + L-glutamate + ADP + phosphate + 2 H(+). In terms of biological role, allows the formation of correctly charged Asn-tRNA(Asn) or Gln-tRNA(Gln) through the transamidation of misacylated Asp-tRNA(Asn) or Glu-tRNA(Gln) in organisms which lack either or both of asparaginyl-tRNA or glutaminyl-tRNA synthetases. The reaction takes place in the presence of glutamine and ATP through an activated phospho-Asp-tRNA(Asn) or phospho-Glu-tRNA(Gln). The polypeptide is Aspartyl/glutamyl-tRNA(Asn/Gln) amidotransferase subunit C (Kineococcus radiotolerans (strain ATCC BAA-149 / DSM 14245 / SRS30216)).